The following is a 333-amino-acid chain: uncharacterized protein (333 aa).

This is an uncharacterized protein from Escherichia coli (Bacteriophage T4).